Consider the following 280-residue polypeptide: Phosphonoacetaldehyde hydrolase (280 aa).

Asp20 functions as the Nucleophile in the catalytic mechanism. Residues Asp20 and Ala22 each coordinate Mg(2+). Lys61 acts as the Schiff-base intermediate with substrate in catalysis. Asp194 lines the Mg(2+) pocket.

This sequence belongs to the HAD-like hydrolase superfamily. PhnX family. As to quaternary structure, homodimer. Mg(2+) serves as cofactor.

It catalyses the reaction phosphonoacetaldehyde + H2O = acetaldehyde + phosphate + H(+). In terms of biological role, involved in phosphonate degradation. This is Phosphonoacetaldehyde hydrolase from Nitratidesulfovibrio vulgaris (strain DSM 19637 / Miyazaki F) (Desulfovibrio vulgaris).